The following is a 424-amino-acid chain: Histidine--tRNA ligase (424 aa).

Belongs to the class-II aminoacyl-tRNA synthetase family. As to quaternary structure, homodimer.

The protein resides in the cytoplasm. It catalyses the reaction tRNA(His) + L-histidine + ATP = L-histidyl-tRNA(His) + AMP + diphosphate + H(+). This chain is Histidine--tRNA ligase, found in Shigella sonnei (strain Ss046).